A 303-amino-acid polypeptide reads, in one-letter code: UDP-3-O-acyl-N-acetylglucosamine deacetylase (303 aa).

His78, His237, and Asp241 together coordinate Zn(2+). The active-site Proton donor is the His264.

Belongs to the LpxC family. Zn(2+) is required as a cofactor.

It carries out the reaction a UDP-3-O-[(3R)-3-hydroxyacyl]-N-acetyl-alpha-D-glucosamine + H2O = a UDP-3-O-[(3R)-3-hydroxyacyl]-alpha-D-glucosamine + acetate. The protein operates within glycolipid biosynthesis; lipid IV(A) biosynthesis; lipid IV(A) from (3R)-3-hydroxytetradecanoyl-[acyl-carrier-protein] and UDP-N-acetyl-alpha-D-glucosamine: step 2/6. Functionally, catalyzes the hydrolysis of UDP-3-O-myristoyl-N-acetylglucosamine to form UDP-3-O-myristoylglucosamine and acetate, the committed step in lipid A biosynthesis. The chain is UDP-3-O-acyl-N-acetylglucosamine deacetylase from Pseudomonas fluorescens (strain ATCC BAA-477 / NRRL B-23932 / Pf-5).